A 432-amino-acid polypeptide reads, in one-letter code: Serine--tRNA ligase (432 aa).

238–240 (TAE) lines the L-serine pocket. 269-271 (RSE) contacts ATP. Glu292 is an L-serine binding site. ATP is bound at residue 357-360 (EISS). Ser393 contacts L-serine.

This sequence belongs to the class-II aminoacyl-tRNA synthetase family. Type-1 seryl-tRNA synthetase subfamily. As to quaternary structure, homodimer. The tRNA molecule binds across the dimer.

It localises to the cytoplasm. The enzyme catalyses tRNA(Ser) + L-serine + ATP = L-seryl-tRNA(Ser) + AMP + diphosphate + H(+). It carries out the reaction tRNA(Sec) + L-serine + ATP = L-seryl-tRNA(Sec) + AMP + diphosphate + H(+). Its pathway is aminoacyl-tRNA biosynthesis; selenocysteinyl-tRNA(Sec) biosynthesis; L-seryl-tRNA(Sec) from L-serine and tRNA(Sec): step 1/1. In terms of biological role, catalyzes the attachment of serine to tRNA(Ser). Is also able to aminoacylate tRNA(Sec) with serine, to form the misacylated tRNA L-seryl-tRNA(Sec), which will be further converted into selenocysteinyl-tRNA(Sec). In Hyphomonas neptunium (strain ATCC 15444), this protein is Serine--tRNA ligase.